We begin with the raw amino-acid sequence, 790 residues long: PAN2-PAN3 deadenylation complex subunit PAN3 (790 aa).

2 disordered regions span residues 166-191 and 235-259; these read IAQQ…AVSA and AMIS…ASPI. Positions 168 to 191 are enriched in low complexity; that stretch reads QQQPQHPQKQQQHPPSVGGGAVSA. The tract at residues 369–655 is pseudokinase domain; sequence DAAEAAQHAL…SVTDLMPMIG (287 aa). ATP contacts are provided by residues R423, 472–479, and 552–553; these read DYHPGSQT and TK. Positions 656–694 form a coiled coil; that stretch reads ARFYTQLDALQSKIDMQEDELAKEMENGRLYRILVKLNS. The tract at residues 695–790 is knob domain; it reads INERPDFNLD…FSELMSSAAN (96 aa).

This sequence belongs to the protein kinase superfamily. PAN3 family. As to quaternary structure, homodimer. Forms a heterotrimer with a catalytic subunit PAN2 to form the poly(A)-nuclease (PAN) deadenylation complex. Interacts (via PAM-2 motif) with poly(A)-binding protein (via PABC domain), conferring substrate specificity of the enzyme complex. Interacts with the GW182 family protein gw. Interacts with Gyf.

It is found in the cytoplasm. Its subcellular location is the P-body. Regulatory subunit of the poly(A)-nuclease (PAN) deadenylation complex, one of two cytoplasmic mRNA deadenylases involved in general and miRNA-mediated mRNA turnover. PAN specifically shortens poly(A) tails of RNA and the activity is stimulated by poly(A)-binding protein (PABP). PAN deadenylation is followed by rapid degradation of the shortened mRNA tails by the CCR4-NOT complex. Deadenylated mRNAs are then degraded by two alternative mechanisms, namely exosome-mediated 3'-5' exonucleolytic degradation, or deadenylation-dependent mRNA decaping and subsequent 5'-3' exonucleolytic degradation by XRN1. PAN3 acts as a positive regulator for PAN activity, recruiting the catalytic subunit PAN2 to mRNA via its interaction with RNA and PABP, and to miRNA targets via its interaction with GW182 family proteins. In Drosophila melanogaster (Fruit fly), this protein is PAN2-PAN3 deadenylation complex subunit PAN3.